A 258-amino-acid polypeptide reads, in one-letter code: Alpha-fibrinogenase-like (258 aa).

An N-terminal signal peptide occupies residues 1–18 (MVLIRVLANLLVLQLSYA). A propeptide spanning residues 19–24 (QKSSEL) is cleaved from the precursor. The region spanning 25-249 (VVGGHPCNIY…YTDWIHSIIA (225 aa)) is the Peptidase S1 domain. Cystine bridges form between Cys31/Cys163, Cys50/Cys66, Cys98/Cys256, Cys142/Cys210, Cys174/Cys189, and Cys200/Cys225. Asn44 carries an N-linked (GlcNAc...) asparagine glycan. Active-site charge relay system residues include His65 and Asp110. The active-site Charge relay system is the Ser204.

It belongs to the peptidase S1 family. Snake venom subfamily. In terms of assembly, monomer. Expressed by the venom gland.

It is found in the secreted. Degrades alpha chain of fibrinogen (FGA), and has strong caseinolytic activity. Cleaves oxidized insulin B-chain at '40-Tyr-|-Leu-41', '48-Phe-|-Phe-49' and '49-Phe-|-Tyr-50', and glucagon at the bonds '62-Tyr-|-Ser-63', 66-Leu-|-Asp-67' and '78-Leu-|-Met-79' bonds. This Daboia siamensis (Eastern Russel's viper) protein is Alpha-fibrinogenase-like.